The following is a 111-amino-acid chain: Large ribosomal subunit protein uL22 (111 aa).

Belongs to the universal ribosomal protein uL22 family. As to quaternary structure, part of the 50S ribosomal subunit.

Functionally, this protein binds specifically to 23S rRNA; its binding is stimulated by other ribosomal proteins, e.g. L4, L17, and L20. It is important during the early stages of 50S assembly. It makes multiple contacts with different domains of the 23S rRNA in the assembled 50S subunit and ribosome. The globular domain of the protein is located near the polypeptide exit tunnel on the outside of the subunit, while an extended beta-hairpin is found that lines the wall of the exit tunnel in the center of the 70S ribosome. This is Large ribosomal subunit protein uL22 from Chlamydia trachomatis serovar L2b (strain UCH-1/proctitis).